We begin with the raw amino-acid sequence, 119 residues long: Ribonuclease P protein component (119 aa).

The protein belongs to the RnpA family. In terms of assembly, consists of a catalytic RNA component (M1 or rnpB) and a protein subunit.

It carries out the reaction Endonucleolytic cleavage of RNA, removing 5'-extranucleotides from tRNA precursor.. In terms of biological role, RNaseP catalyzes the removal of the 5'-leader sequence from pre-tRNA to produce the mature 5'-terminus. It can also cleave other RNA substrates such as 4.5S RNA. The protein component plays an auxiliary but essential role in vivo by binding to the 5'-leader sequence and broadening the substrate specificity of the ribozyme. In Haemophilus influenzae (strain 86-028NP), this protein is Ribonuclease P protein component.